A 116-amino-acid chain; its full sequence is MRHNHGYRKLGRTSAHRKALLKNLAIALVENQKIETTVIKAKELQSYIEKLITKASEGSFNAHRAVFAHLQDKNATNKLVVEIAPKYSDRKGGYTRIVRTRLRKGDAAPLAFIELI.

It belongs to the bacterial ribosomal protein bL17 family. As to quaternary structure, part of the 50S ribosomal subunit. Contacts protein L32.

The sequence is that of Large ribosomal subunit protein bL17 from Wolinella succinogenes (strain ATCC 29543 / DSM 1740 / CCUG 13145 / JCM 31913 / LMG 7466 / NCTC 11488 / FDC 602W) (Vibrio succinogenes).